A 580-amino-acid chain; its full sequence is PX domain-containing protein kinase-like protein (580 aa).

Residues 14–126 form the PX domain; that stretch reads LDDTVPLTAA…KFLDPNNYSA (113 aa). The Protein kinase domain maps to 88-481; the sequence is FIAERQKGLQ…VENSEEQPVK (394 aa). The disordered stretch occupies residues 433–551; it reads EQKQIHQHRR…LPQAVNGVNR (119 aa). Basic residues-rich tracts occupy residues 437–448 and 457–469; these read IHQHRRLTRAQS and KRRK…KSKR. Residues 483–514 are compositionally biased toward low complexity; the sequence is SNANNSAGSGASSPLTSPSSPTPPSTAGLSSA. Residues 515 to 531 are compositionally biased toward pro residues; it reads LPPPPPPPPPPPPPAGP. Residues 549 to 568 enclose the WH2 domain; sequence VNRGALLSSIQNFQKGTLRK.

It belongs to the protein kinase superfamily.

The protein localises to the cytoplasm. The protein resides in the cell membrane. Binds to and modulates brain Na,K-ATPase subunits ATP1B1 and ATP1B3 and may thereby participate in the regulation of electrical excitability and synaptic transmission. May not display kinase activity. In Rattus norvegicus (Rat), this protein is PX domain-containing protein kinase-like protein.